The chain runs to 403 residues: Cysteine desulfurase IscS (403 aa).

Residues 75-76, Asn-155, Gln-183, and 203-205 contribute to the pyridoxal 5'-phosphate site; these read AT and SAH. Lys-206 carries the post-translational modification N6-(pyridoxal phosphate)lysine. Position 243 (Thr-243) interacts with pyridoxal 5'-phosphate. The Cysteine persulfide intermediate role is filled by Cys-328. Cys-328 contributes to the [2Fe-2S] cluster binding site.

The protein belongs to the class-V pyridoxal-phosphate-dependent aminotransferase family. NifS/IscS subfamily. In terms of assembly, homodimer. Forms a heterotetramer with IscU, interacts with other sulfur acceptors. Requires pyridoxal 5'-phosphate as cofactor.

It is found in the cytoplasm. It carries out the reaction (sulfur carrier)-H + L-cysteine = (sulfur carrier)-SH + L-alanine. It participates in cofactor biosynthesis; iron-sulfur cluster biosynthesis. Functionally, master enzyme that delivers sulfur to a number of partners involved in Fe-S cluster assembly, tRNA modification or cofactor biosynthesis. Catalyzes the removal of elemental sulfur atoms from cysteine to produce alanine. Functions as a sulfur delivery protein for Fe-S cluster synthesis onto IscU, an Fe-S scaffold assembly protein, as well as other S acceptor proteins. This is Cysteine desulfurase IscS from Psychromonas ingrahamii (strain DSM 17664 / CCUG 51855 / 37).